A 210-amino-acid polypeptide reads, in one-letter code: Imidazoleglycerol-phosphate dehydratase (210 aa).

Positions Met1–Thr23 are disordered.

It belongs to the imidazoleglycerol-phosphate dehydratase family.

It localises to the cytoplasm. It catalyses the reaction D-erythro-1-(imidazol-4-yl)glycerol 3-phosphate = 3-(imidazol-4-yl)-2-oxopropyl phosphate + H2O. It participates in amino-acid biosynthesis; L-histidine biosynthesis; L-histidine from 5-phospho-alpha-D-ribose 1-diphosphate: step 6/9. This Thermosynechococcus vestitus (strain NIES-2133 / IAM M-273 / BP-1) protein is Imidazoleglycerol-phosphate dehydratase.